The chain runs to 415 residues: MFERSRFTIDQIDPEVFAAIQQENQRQEDHIELIASENYTSPAVMAAQGSQLTNKYAEGYPGKRYYGGCEYVDVVEQLAIDRVKQLFGAEAANVQPNSGSQANQGVYFAVLKPGDTIMGMSLAEGGHLTHGMALNMSGKWFNVVSYGLNAQEDIDYDALEKLAQEKKPKLIIAGASAFALRIDFERISKVAKSIGAYFMVDMAHYAGLIAAGVYPNPVPHADFVTTTTHKSLRGPRGGVILMKAEHEKAINSAIFPGIQGGPLMHVIAGKAVAFKEALTPEFKEYQQQVVKNAAVLAETLIARGLRIVSGRTESHVMLVDLRAKNITGKEAERILGEAHITVNKNAIPNDPEKPFVTSGIRLGSPAMTTRGFKEEEARIVGNLIADVLDNPHDAANIASVREQAAALTKRFPVYG.

(6S)-5,6,7,8-tetrahydrofolate contacts are provided by residues Leu-122 and 126–128; that span reads GHL. Lys-230 carries the N6-(pyridoxal phosphate)lysine modification.

Belongs to the SHMT family. In terms of assembly, homodimer. Requires pyridoxal 5'-phosphate as cofactor.

The protein localises to the cytoplasm. The enzyme catalyses (6R)-5,10-methylene-5,6,7,8-tetrahydrofolate + glycine + H2O = (6S)-5,6,7,8-tetrahydrofolate + L-serine. It participates in one-carbon metabolism; tetrahydrofolate interconversion. It functions in the pathway amino-acid biosynthesis; glycine biosynthesis; glycine from L-serine: step 1/1. Its function is as follows. Catalyzes the reversible interconversion of serine and glycine with tetrahydrofolate (THF) serving as the one-carbon carrier. This reaction serves as the major source of one-carbon groups required for the biosynthesis of purines, thymidylate, methionine, and other important biomolecules. Also exhibits THF-independent aldolase activity toward beta-hydroxyamino acids, producing glycine and aldehydes, via a retro-aldol mechanism. The chain is Serine hydroxymethyltransferase from Cupriavidus necator (strain ATCC 17699 / DSM 428 / KCTC 22496 / NCIMB 10442 / H16 / Stanier 337) (Ralstonia eutropha).